Here is a 126-residue protein sequence, read N- to C-terminus: uncharacterized protein (126 aa).

Residues R4–R126 form the VOC domain. 4 residues coordinate a divalent metal cation: H7, E42, H74, and E122.

This sequence belongs to the glyoxalase I family.

This is an uncharacterized protein from Bacillus subtilis (strain 168).